A 348-amino-acid chain; its full sequence is Phenylalanine--tRNA ligase alpha subunit (348 aa).

E262 provides a ligand contact to Mg(2+).

This sequence belongs to the class-II aminoacyl-tRNA synthetase family. Phe-tRNA synthetase alpha subunit type 1 subfamily. Tetramer of two alpha and two beta subunits. Mg(2+) is required as a cofactor.

Its subcellular location is the cytoplasm. The enzyme catalyses tRNA(Phe) + L-phenylalanine + ATP = L-phenylalanyl-tRNA(Phe) + AMP + diphosphate + H(+). The chain is Phenylalanine--tRNA ligase alpha subunit from Streptococcus pneumoniae serotype 2 (strain D39 / NCTC 7466).